Reading from the N-terminus, the 355-residue chain is Membrane cofactor protein (355 aa).

Positions 1–42 are cleaved as a signal peptide; the sequence is MTAAPLTPDPTHPRRRRKSYTFFSLGIYAEALLFLLSSLSDA. Sushi domains lie at 43-104, 105-168, 169-234, and 235-294; these read CEPP…GCIK, VQCT…SCKK, VYCL…ECKV, and VKCP…QCLK. At 43–326 the chain is on the extracellular side; the sequence is CEPPPPFEAM…GIFGQEFDAW (284 aa). 6 cysteine pairs are disulfide-bonded: cysteine 107/cysteine 149, cysteine 135/cysteine 166, cysteine 171/cysteine 219, cysteine 200/cysteine 232, cysteine 237/cysteine 279, and cysteine 265/cysteine 292. Asparagine 179 carries N-linked (GlcNAc...) asparagine glycosylation. Residue threonine 301 is glycosylated (O-linked (GalNAc...) threonine). The chain crosses the membrane as a helical span at residues 327 to 347; it reads IIALIVVTSVVGVIVICLIIL. The Cytoplasmic segment spans residues 348–355; sequence RCSEYRKK.

Interacts with C3b. Interacts with C4b. Interacts with moesin/MSN. In terms of processing, O-glycosylated. Post-translationally, N-glycosylated. Specifically expressed in testis. Within testis, present only in elongated spermatids and spermatozoa (at protein level).

Its subcellular location is the cytoplasmic vesicle. It localises to the secretory vesicle. The protein resides in the acrosome inner membrane. In terms of biological role, may be involved in the fusion of the spermatozoa with the oocyte during fertilization. The chain is Membrane cofactor protein (Cd46) from Rattus norvegicus (Rat).